Consider the following 158-residue polypeptide: MRRILSVLLENESGALSRVIGLFSQRGYNIETITVAPTEDPSLSKMTIQTIGNEKSIEQIEKQLHKLIDVLRVIKVGQNSHIEREIMLLKVQTNNCKKDDVKHITEVFRGQIVDITSTTYVLQITGTAKKLDSFLKIIRNTTEIIEMTRSGIVGIARG.

Residues 4–78 enclose the ACT domain; sequence ILSVLLENES…DVLRVIKVGQ (75 aa).

This sequence belongs to the acetolactate synthase small subunit family. In terms of assembly, dimer of large and small chains.

It carries out the reaction 2 pyruvate + H(+) = (2S)-2-acetolactate + CO2. It participates in amino-acid biosynthesis; L-isoleucine biosynthesis; L-isoleucine from 2-oxobutanoate: step 1/4. The protein operates within amino-acid biosynthesis; L-valine biosynthesis; L-valine from pyruvate: step 1/4. The polypeptide is Acetolactate synthase small subunit (ilvH) (Buchnera aphidicola subsp. Schizaphis graminum (strain Sg)).